The primary structure comprises 185 residues: Putative lipoprotein LprB (185 aa).

Positions 1 to 24 are cleaved as a signal peptide; it reads MRRKVRRLTLAVSALVALFPAVAG. The N-palmitoyl cysteine moiety is linked to residue cysteine 25. Residue cysteine 25 is the site of S-diacylglycerol cysteine attachment. A disordered region spans residues 26–50; that stretch reads SDSGDNKPGATIPSTPANAEGRHGP.

Its subcellular location is the cell membrane. The sequence is that of Putative lipoprotein LprB (lprB) from Mycobacterium bovis (strain ATCC BAA-935 / AF2122/97).